Reading from the N-terminus, the 259-residue chain is Putative deoxyribonuclease TATDN1 homolog (259 aa).

Glutamate 82, histidine 116, histidine 138, and aspartate 186 together coordinate a divalent metal cation.

This sequence belongs to the metallo-dependent hydrolases superfamily. TatD-type hydrolase family. Requires a divalent metal cation as cofactor.

The protein resides in the nucleus. Putative deoxyribonuclease. The chain is Putative deoxyribonuclease TATDN1 homolog from Vairimorpha ceranae (strain BRL01) (Microsporidian parasite).